The sequence spans 258 residues: Tetraspanin-18B (258 aa).

Over 1 to 25 (MGLGEASARGTSMEGDCLSCIKYLM) the chain is Cytoplasmic. Residues 26-46 (FVFNFLIFLGGSFLLGVGVWV) traverse the membrane as a helical segment. The Extracellular portion of the chain corresponds to 47-61 (VVDPTGFREIVAANP). Residues 62–82 (LLFTGVYIILAMGGMLFLLGF) form a helical membrane-spanning segment. The Cytoplasmic portion of the chain corresponds to 83–94 (LGCCGAIRENKC). The helical transmembrane segment at 95–115 (LLLFFFMLILIIFLAELAAAI) threads the bilayer. At 116-228 (LAFIFREHLT…SAVVDYFEMY (113 aa)) the chain is on the extracellular side. N-linked (GlcNAc...) asparagine glycosylation occurs at asparagine 141. The helical transmembrane segment at 229–249 (IYVAGALAIVVLTIELFAMVF) threads the bilayer. The Cytoplasmic portion of the chain corresponds to 250–258 (AMCLFRGIQ).

The protein belongs to the tetraspanin (TM4SF) family.

The protein resides in the membrane. Functionally, may regulate angiogenesis through KDR/VEGFR2 and NOTCH1 pathways. The sequence is that of Tetraspanin-18B (tspan18b) from Danio rerio (Zebrafish).